We begin with the raw amino-acid sequence, 382 residues long: Putative acetyl-CoA C-acetyltransferase VraB (382 aa).

Catalysis depends on Cys86, which acts as the Acyl-thioester intermediate. The Proton acceptor role is filled by His338.

It belongs to the thiolase-like superfamily. Thiolase family.

The chain is Putative acetyl-CoA C-acetyltransferase VraB (vraB) from Staphylococcus epidermidis (strain ATCC 12228 / FDA PCI 1200).